Consider the following 484-residue polypeptide: Cobyric acid synthase (484 aa).

The region spanning 248 to 435 (VLKVIVPVLP…LHGLFEGSQS (188 aa)) is the GATase cobBQ-type domain. Cys-329 serves as the catalytic Nucleophile. Residue His-427 is part of the active site.

The protein belongs to the CobB/CobQ family. CobQ subfamily.

Its pathway is cofactor biosynthesis; adenosylcobalamin biosynthesis. Catalyzes amidations at positions B, D, E, and G on adenosylcobyrinic A,C-diamide. NH(2) groups are provided by glutamine, and one molecule of ATP is hydrogenolyzed for each amidation. The protein is Cobyric acid synthase of Pseudomonas putida (strain W619).